A 156-amino-acid chain; its full sequence is Small ribosomal subunit protein uS7 (156 aa).

This sequence belongs to the universal ribosomal protein uS7 family. In terms of assembly, part of the 30S ribosomal subunit. Contacts proteins S9 and S11.

Functionally, one of the primary rRNA binding proteins, it binds directly to 16S rRNA where it nucleates assembly of the head domain of the 30S subunit. Is located at the subunit interface close to the decoding center, probably blocks exit of the E-site tRNA. This Shewanella sediminis (strain HAW-EB3) protein is Small ribosomal subunit protein uS7.